The primary structure comprises 543 residues: Cysteine/serine-rich nuclear protein 2 (543 aa).

Met1 bears the N-acetylmethionine mark. Disordered stretches follow at residues 1–51 (MDAF…SFTP), 281–305 (KRQVSRPAAPDEEPSPTASCSLTGA), and 488–543 (DCNP…PLAV). The span at 31-40 (SSDSADSCDS) shows a compositional bias: low complexity. Composition is skewed to polar residues over residues 42 to 51 (NPPTTASFTP) and 296 to 305 (PTASCSLTGA).

It belongs to the AXUD1 family.

The protein resides in the nucleus. In terms of biological role, binds to the consensus sequence 5'-AGAGTG-3' and has transcriptional activator activity. May play a role in apoptosis. This chain is Cysteine/serine-rich nuclear protein 2 (CSRNP2), found in Homo sapiens (Human).